The following is a 452-amino-acid chain: Phosphoglucosamine mutase (452 aa).

Serine 103 serves as the catalytic Phosphoserine intermediate. Mg(2+) is bound by residues serine 103, aspartate 244, aspartate 246, and aspartate 248. Position 103 is a phosphoserine (serine 103).

Belongs to the phosphohexose mutase family. Requires Mg(2+) as cofactor. Activated by phosphorylation.

It carries out the reaction alpha-D-glucosamine 1-phosphate = D-glucosamine 6-phosphate. In terms of biological role, catalyzes the conversion of glucosamine-6-phosphate to glucosamine-1-phosphate. This is Phosphoglucosamine mutase from Fusobacterium nucleatum subsp. nucleatum (strain ATCC 25586 / DSM 15643 / BCRC 10681 / CIP 101130 / JCM 8532 / KCTC 2640 / LMG 13131 / VPI 4355).